Consider the following 518-residue polypeptide: Membrane-bound glycerophospholipid O-acyltransferase 2 (518 aa).

The next 6 helical transmembrane spans lie at 21 to 41 (PVDQ…AIWF), 60 to 80 (TLLG…HFVI), 87 to 107 (YLMI…FALG), 183 to 203 (FMGI…FIEG), 230 to 250 (IAVA…MTIT), and 267 to 283 (ASWP…LMAA). Catalysis depends on residues asparagine 341 and histidine 372. A run of 3 helical transmembrane segments spans residues 365–385 (FILS…FLTG), 415–435 (IITW…FVLL), and 443–463 (FYSS…LVFP).

The protein belongs to the membrane-bound acyltransferase family.

It is found in the endoplasmic reticulum membrane. It carries out the reaction a 1-acyl-sn-glycero-3-phosphocholine + an acyl-CoA = a 1,2-diacyl-sn-glycero-3-phosphocholine + CoA. It catalyses the reaction a 1-acyl-sn-glycero-3-phosphoethanolamine + an acyl-CoA = a 1,2-diacyl-sn-glycero-3-phosphoethanolamine + CoA. The catalysed reaction is a 1-acyl-sn-glycero-3-phosphate + an acyl-CoA = a 1,2-diacyl-sn-glycero-3-phosphate + CoA. The enzyme catalyses (9Z)-hexadecenoyl-CoA + 1-hexadecanoyl-sn-glycero-3-phosphocholine = 1-hexadecanoyl-2-(9Z-hexadecenoyl)-sn-glycero-3-phosphocholine + CoA. It carries out the reaction 1-hexadecanoyl-sn-glycero-3-phosphoethanolamine + (9Z)-octadecenoyl-CoA = 1-hexadecanoyl-2-(9Z-octadecenoyl)-sn-glycero-3-phosphoethanolamine + CoA. It catalyses the reaction 1-hexadecanoyl-sn-glycero-3-phosphoethanolamine + (9Z)-hexadecenoyl-CoA = 1-hexadecanoyl-2-(9Z)-hexadecenoyl-sn-glycero-3-phosphoethanolamine + CoA. The catalysed reaction is 1-(9Z-octadecenoyl)-sn-glycero-3-phospho-L-serine + hexadecanoyl-CoA = 1-(9Z)-octadecenoyl-2-hexadecanoyl-sn-glycero-3-phosphoserine + CoA. The enzyme catalyses (9Z,12Z)-octadecadienoyl-CoA + 1-hexadecanoyl-sn-glycero-3-phosphocholine = 1-hexadecanoyl-2-(9Z,12Z-octadecadienoyl)-sn-glycero-3-phosphocholine + CoA. It carries out the reaction 1-hexadecanoyl-sn-glycero-3-phosphocholine + (9Z)-octadecenoyl-CoA = 1-hexadecanoyl-2-(9Z-octadecenoyl)-sn-glycero-3-phosphocholine + CoA. It catalyses the reaction 1-hexadecanoyl-sn-glycero-3-phosphate + (9Z)-hexadecenoyl-CoA = 1-hexadecanoyl-2-[(9Z)-hexadec-9-enoyl]-sn-glycero-3-phosphate + CoA. The catalysed reaction is 1-hexadecanoyl-sn-glycero-3-phosphate + (9Z)-octadecenoyl-CoA = 1-hexadecanoyl-2-(9Z-octadecenoyl)-sn-glycero-3-phosphate + CoA. The enzyme catalyses a 1-O-(1Z-alkenyl)-sn-glycero-3-phosphocholine + (9Z)-octadecenoyl-CoA = 1-O-(1Z)-alkenyl-2-(9Z)-octadecenoyl-sn-glycero-3-phosphocholine + CoA. It carries out the reaction a 1-O-(1Z-alkenyl)-sn-glycero-3-phosphoethanolamine + (9Z)-octadecenoyl-CoA = 1-O-(1Z)-alkenyl-2-(9Z)-octadecenoyl-sn-glycero-3-phosphoethanolamine + CoA. It catalyses the reaction 1-octadecanoyl-sn-glycero-3-phosphoethanolamine + (9Z)-octadecenoyl-CoA = 1-octadecanoyl-2-(9Z-octadecenoyl)-sn-glycero-3-phosphoethanolamine + CoA. The catalysed reaction is 1-octadecanoyl-sn-glycero-3-phosphocholine + (9Z)-octadecenoyl-CoA = 1-octadecanoyl-2-(9Z-octadecenoyl)-sn-glycero-3-phosphocholine + CoA. The enzyme catalyses 1-(9Z-octadecenoyl)-sn-glycero-3-phosphoethanolamine + (9Z)-octadecenoyl-CoA = 1,2-di-(9Z-octadecenoyl)-sn-glycero-3-phosphoethanolamine + CoA. It functions in the pathway lipid metabolism; phospholipid metabolism. In terms of biological role, acyltransferase which catalyzes the transfer of an acyl group from an acyl-CoA to a lysophospholipid leading to the production of a phospholipid and participates in the reacylation step of the phospholipid remodeling pathway also known as the Lands cycle. May catalyze preferentially the acylation of lysophosphatidylethanolamine (1-acyl-sn-glycero-3-phosphoethanolamine or LPE) and lysophosphatidic acid (LPA) and to a lesser extend lysophosphatidylcholine (LPC) and lysophosphatidylserine (LPS). Prefers oleoyl-CoA as the acyl donor. In Gallus gallus (Chicken), this protein is Membrane-bound glycerophospholipid O-acyltransferase 2.